A 289-amino-acid chain; its full sequence is MKHGIYYSYWEHEWSAKFGPYIEKVAKLGFDIIEVAAHHINEYSDAELATIRKSAKDNGIILTAGIGPSKTKNLSSEDAAVRAAGKAFFERTLSNVAKLDIHTIGGALHSYWPIDYSQPVDKAGDYARGVEGINGIADFANDLGINLCIEVLNRFENHVLNTAAEGVAFVKDVGKNNVKVMLDTFHMNIEEDSFGDAIRTAGPLLGHFHTGESNRRVPGKGRMPWHEIGLALRDINYTGAVIMEPFVKTGGTIGSDIKVWRDLSGGADIAKMDEDARNALAFSRFVLGG.

The substrate site is built by Y6 and A107. E150 serves as the catalytic Proton donor/acceptor. Residue E150 participates in Mn(2+) binding. Residues E156 and 183–186 (DTFH) contribute to the substrate site. The Mn(2+) site is built by D183 and H209. Position 215 (R215) interacts with substrate. Catalysis depends on E244, which acts as the Proton donor/acceptor. Mn(2+) is bound at residue E244.

The protein belongs to the hyi family. Homotetramer. The cofactor is Mn(2+). Requires Co(2+) as cofactor.

The enzyme catalyses D-allulose = keto-D-fructose. Inhibited by Zn(2+) and Cu(2+). Functionally, involved in the biosynthesis of D-psicose. Catalyzes the reversible epimerization of D-fructose at the C3 position to yield D-psicose. The enzyme is highly specific for D-psicose and shows very low activity with D-tagatose. The substrate specificity decreases in the following order: D-fructose, D-tagatose, D-ribulose, D-xylulose, and D-sorbose. It shows a higher level of activity for cis ketoses than for trans-ketoses. This is D-psicose 3-epimerase (dpe) from Agrobacterium fabrum (strain C58 / ATCC 33970) (Agrobacterium tumefaciens (strain C58)).